The following is a 542-amino-acid chain: Zinc finger protein 280A (542 aa).

A disordered region spans residues 66-185 (VTPGSNSRRK…RDSKRVKLRD (120 aa)). Positions 107–122 (EGRSTDSPVTMKSSSE) are enriched in polar residues. Over residues 128–143 (SSPQVVSPSSSDSLPP) the composition is skewed to low complexity. Basic and acidic residues predominate over residues 161-185 (SSPDSKRLSTSDINSRDSKRVKLRD). 4 consecutive C2H2-type zinc fingers follow at residues 334–357 (TTCQ…DSVH), 364–387 (AVCK…KDHH), 423–445 (LLCL…CWRH), and 451–474 (LQCS…TKDH). The segment covering 499-520 (QPGSSGMASVIVSNTDPQSSPV) has biased composition (polar residues). Positions 499–542 (QPGSSGMASVIVSNTDPQSSPVKTKKKTAMNTRDSRLPCSKDSS) are disordered.

Its subcellular location is the nucleus. In terms of biological role, may function as a transcription factor. The chain is Zinc finger protein 280A (ZNF280A) from Homo sapiens (Human).